The sequence spans 336 residues: Aspartate carbamoyltransferase catalytic subunit (336 aa).

Residues Arg72 and Thr73 each contribute to the carbamoyl phosphate site. Lys100 serves as a coordination point for L-aspartate. Residues Arg122, His152, and Gln155 each contribute to the carbamoyl phosphate site. L-aspartate-binding residues include Arg185 and Arg240. Residues Gly281 and Pro282 each coordinate carbamoyl phosphate.

Belongs to the aspartate/ornithine carbamoyltransferase superfamily. ATCase family. As to quaternary structure, heterododecamer (2C3:3R2) of six catalytic PyrB chains organized as two trimers (C3), and six regulatory PyrI chains organized as three dimers (R2).

It catalyses the reaction carbamoyl phosphate + L-aspartate = N-carbamoyl-L-aspartate + phosphate + H(+). It participates in pyrimidine metabolism; UMP biosynthesis via de novo pathway; (S)-dihydroorotate from bicarbonate: step 2/3. Functionally, catalyzes the condensation of carbamoyl phosphate and aspartate to form carbamoyl aspartate and inorganic phosphate, the committed step in the de novo pyrimidine nucleotide biosynthesis pathway. This Marinobacter nauticus (strain ATCC 700491 / DSM 11845 / VT8) (Marinobacter aquaeolei) protein is Aspartate carbamoyltransferase catalytic subunit.